Consider the following 61-residue polypeptide: Transmembrane protein 300R (61 aa).

The next 2 membrane-spanning stretches (helical) occupy residues 5–25 (FLDL…FYLT) and 35–55 (SLSY…IYLQ).

Its subcellular location is the membrane. The protein is Transmembrane protein 300R of Invertebrate iridescent virus 6 (IIV-6).